Consider the following 123-residue polypeptide: Large ribosomal subunit protein uL14 (123 aa).

The protein belongs to the universal ribosomal protein uL14 family. In terms of assembly, part of the 50S ribosomal subunit. Forms a cluster with proteins L3 and L19. In the 70S ribosome, L14 and L19 interact and together make contacts with the 16S rRNA in bridges B5 and B8.

In terms of biological role, binds to 23S rRNA. Forms part of two intersubunit bridges in the 70S ribosome. This Actinobacillus pleuropneumoniae serotype 7 (strain AP76) protein is Large ribosomal subunit protein uL14.